Consider the following 78-residue polypeptide: Large ribosomal subunit protein bL31 (78 aa).

It belongs to the bacterial ribosomal protein bL31 family. Type A subfamily. As to quaternary structure, part of the 50S ribosomal subunit.

Binds the 23S rRNA. The chain is Large ribosomal subunit protein bL31 (rpmE) from Rickettsia conorii (strain ATCC VR-613 / Malish 7).